The sequence spans 286 residues: Pantothenate synthetase (286 aa).

30–37 (MGFLHEGH) is an ATP binding site. The active-site Proton donor is His-37. Gln-61 contacts (R)-pantoate. Gln-61 serves as a coordination point for beta-alanine. An ATP-binding site is contributed by 147–150 (GLKD). Gln-153 lines the (R)-pantoate pocket. ATP contacts are provided by residues Val-176 and 184-187 (KSSR).

Belongs to the pantothenate synthetase family. As to quaternary structure, homodimer.

It is found in the cytoplasm. The catalysed reaction is (R)-pantoate + beta-alanine + ATP = (R)-pantothenate + AMP + diphosphate + H(+). It participates in cofactor biosynthesis; (R)-pantothenate biosynthesis; (R)-pantothenate from (R)-pantoate and beta-alanine: step 1/1. Functionally, catalyzes the condensation of pantoate with beta-alanine in an ATP-dependent reaction via a pantoyl-adenylate intermediate. In Bacillus velezensis (strain DSM 23117 / BGSC 10A6 / LMG 26770 / FZB42) (Bacillus amyloliquefaciens subsp. plantarum), this protein is Pantothenate synthetase.